The sequence spans 382 residues: Lipid-A-disaccharide synthase (382 aa).

This sequence belongs to the LpxB family.

The catalysed reaction is a lipid X + a UDP-2-N,3-O-bis[(3R)-3-hydroxyacyl]-alpha-D-glucosamine = a lipid A disaccharide + UDP + H(+). It functions in the pathway bacterial outer membrane biogenesis; LPS lipid A biosynthesis. Its function is as follows. Condensation of UDP-2,3-diacylglucosamine and 2,3-diacylglucosamine-1-phosphate to form lipid A disaccharide, a precursor of lipid A, a phosphorylated glycolipid that anchors the lipopolysaccharide to the outer membrane of the cell. This is Lipid-A-disaccharide synthase from Alkalilimnicola ehrlichii (strain ATCC BAA-1101 / DSM 17681 / MLHE-1).